The chain runs to 369 residues: S-adenosyl-L-methionine-dependent uroporphyrinogen III methyltransferase, chloroplastic (369 aa).

The transit peptide at 1–28 (MALVQRIPISSSSIRNWQQARTNLTPIC) directs the protein to the chloroplast. S-adenosyl-L-homocysteine contacts are provided by residues Pro-124, 200 to 202 (GGD), 230 to 231 (TA), Met-284, and Thr-341.

It belongs to the precorrin methyltransferase family. Mostly expressed in leaves, and, to a lower extent, in stems, flowers and siliques.

Its subcellular location is the plastid. It is found in the chloroplast. It catalyses the reaction uroporphyrinogen III + 2 S-adenosyl-L-methionine = precorrin-2 + 2 S-adenosyl-L-homocysteine + H(+). Its pathway is porphyrin-containing compound metabolism; siroheme biosynthesis; precorrin-2 from uroporphyrinogen III: step 1/1. In terms of biological role, essential protein required for siroheme biosynthesis. Catalyzes the two successive C-2 and C-7 methylation reactions involved in the conversion of uroporphyrinogen III to precorrin-2 via the intermediate formation of precorrin-1. It is a step in the biosynthesis of siroheme. Promotes nitrogen and sulfur assimilation as well as photosynthesis efficiency by triggering chlorophyll, nitrite reductase (NiR) and sulfite reductase (SiR) biosynthesis. This is S-adenosyl-L-methionine-dependent uroporphyrinogen III methyltransferase, chloroplastic from Arabidopsis thaliana (Mouse-ear cress).